Reading from the N-terminus, the 253-residue chain is MNYIVIKIGGSTLTELHETTIDDIAQLKQQDLHPIIIHGGGPFINQALEQQGVDSLFEDGLRVTTDEVMSITSQILIGKVNPQLVSKMNDENIQSIGLNGIDAKLFDVEPLNEKYGYVGEPININTAVIDHLTEEYIPVIASIGRHKTSRHLYNINADTLAYKIAQTLNAPIYLLSDIPGVMIDNKVKATLNSEHIKNYIEQEQIYGGMIPKVQDAISAIEYGCQKVVIAAGNEAHVVERIRTGKGIGTTIVL.

Substrate-binding positions include 40–41 (GG), arginine 62, and asparagine 154.

Belongs to the acetylglutamate kinase family. ArgB subfamily.

The protein resides in the cytoplasm. The enzyme catalyses N-acetyl-L-glutamate + ATP = N-acetyl-L-glutamyl 5-phosphate + ADP. Its pathway is amino-acid biosynthesis; L-arginine biosynthesis; N(2)-acetyl-L-ornithine from L-glutamate: step 2/4. Its function is as follows. Catalyzes the ATP-dependent phosphorylation of N-acetyl-L-glutamate. The polypeptide is Acetylglutamate kinase (Staphylococcus saprophyticus subsp. saprophyticus (strain ATCC 15305 / DSM 20229 / NCIMB 8711 / NCTC 7292 / S-41)).